The following is a 332-amino-acid chain: Glyceraldehyde-3-phosphate dehydrogenase (332 aa).

Residues 10 to 11 (RI), Asp-36, Lys-81, and Ser-116 contribute to the NAD(+) site. Residues 150-152 (SCT), Thr-181, Arg-197, 210-211 (TK), and Arg-233 contribute to the D-glyceraldehyde 3-phosphate site. The active-site Nucleophile is Cys-151. Asn-314 provides a ligand contact to NAD(+).

It belongs to the glyceraldehyde-3-phosphate dehydrogenase family. As to quaternary structure, homotetramer.

Its subcellular location is the cytoplasm. It catalyses the reaction D-glyceraldehyde 3-phosphate + phosphate + NAD(+) = (2R)-3-phospho-glyceroyl phosphate + NADH + H(+). It functions in the pathway carbohydrate degradation; glycolysis; pyruvate from D-glyceraldehyde 3-phosphate: step 1/5. Functionally, catalyzes the oxidative phosphorylation of glyceraldehyde 3-phosphate (G3P) to 1,3-bisphosphoglycerate (BPG) using the cofactor NAD. The first reaction step involves the formation of a hemiacetal intermediate between G3P and a cysteine residue, and this hemiacetal intermediate is then oxidized to a thioester, with concomitant reduction of NAD to NADH. The reduced NADH is then exchanged with the second NAD, and the thioester is attacked by a nucleophilic inorganic phosphate to produce BPG. This is Glyceraldehyde-3-phosphate dehydrogenase (gapA) from Helicobacter pylori (strain J99 / ATCC 700824) (Campylobacter pylori J99).